Reading from the N-terminus, the 205-residue chain is dITP/XTP pyrophosphatase (205 aa).

Position 10-15 (10-15) interacts with substrate; it reads TKNEGK. Mg(2+) is bound by residues Glu-44 and Asp-73. Asp-73 functions as the Proton acceptor in the catalytic mechanism. Residues Ser-74, 156–159, Lys-179, and 184–185 each bind substrate; these read FGYD and HR.

This sequence belongs to the HAM1 NTPase family. In terms of assembly, homodimer. Requires Mg(2+) as cofactor.

The enzyme catalyses XTP + H2O = XMP + diphosphate + H(+). It carries out the reaction dITP + H2O = dIMP + diphosphate + H(+). The catalysed reaction is ITP + H2O = IMP + diphosphate + H(+). Its function is as follows. Pyrophosphatase that catalyzes the hydrolysis of nucleoside triphosphates to their monophosphate derivatives, with a high preference for the non-canonical purine nucleotides XTP (xanthosine triphosphate), dITP (deoxyinosine triphosphate) and ITP. Seems to function as a house-cleaning enzyme that removes non-canonical purine nucleotides from the nucleotide pool, thus preventing their incorporation into DNA/RNA and avoiding chromosomal lesions. In Dictyoglomus thermophilum (strain ATCC 35947 / DSM 3960 / H-6-12), this protein is dITP/XTP pyrophosphatase.